Consider the following 278-residue polypeptide: MGIRKYKPTTPGRRGSSVADFVEITRSTPEKSLVRPLHSKGGRNNAGRVTVRHQGGGHKRAYRVIDFRRHDKDGVPAKVAHIEYDPNRTARIALLHYADGEKRYIVAPRGLSQGDRVENGPTADIKPGNNLALRNIPVGTTIHAIELRPGGGAKFARSAGASVQLLAKEGTMAHLRMPSGEIRLVDARCRATIGEVGNAEQSNINWGKAGRMRWKGVRPTVRGVAMNPVDHPHGGGEGKTSGGRHPVSPWGQKEGRTRSPKKASNKYIVRRRKTNKKR.

Disordered regions lie at residues 29 to 57 (PEKSLVRPLHSKGGRNNAGRVTVRHQGGG) and 224 to 278 (VAMN…NKKR). Basic residues predominate over residues 258–278 (RSPKKASNKYIVRRRKTNKKR).

This sequence belongs to the universal ribosomal protein uL2 family. Part of the 50S ribosomal subunit. Forms a bridge to the 30S subunit in the 70S ribosome.

One of the primary rRNA binding proteins. Required for association of the 30S and 50S subunits to form the 70S ribosome, for tRNA binding and peptide bond formation. It has been suggested to have peptidyltransferase activity; this is somewhat controversial. Makes several contacts with the 16S rRNA in the 70S ribosome. The protein is Large ribosomal subunit protein uL2 of Streptomyces griseus subsp. griseus (strain JCM 4626 / CBS 651.72 / NBRC 13350 / KCC S-0626 / ISP 5235).